Consider the following 88-residue polypeptide: Small ribosomal subunit protein bS20 (88 aa).

This sequence belongs to the bacterial ribosomal protein bS20 family.

Binds directly to 16S ribosomal RNA. The protein is Small ribosomal subunit protein bS20 of Rhodospirillum rubrum (strain ATCC 11170 / ATH 1.1.1 / DSM 467 / LMG 4362 / NCIMB 8255 / S1).